A 243-amino-acid chain; its full sequence is Vesicle-associated membrane protein-associated protein B (243 aa).

N-acetylalanine is present on A2. The Cytoplasmic portion of the chain corresponds to A2–E218. Positions V7–E124 constitute an MSP domain. S146 bears the Phosphoserine mark. K147 participates in a covalent cross-link: Glycyl lysine isopeptide (Lys-Gly) (interchain with G-Cter in SUMO1). Position 159 is a phosphoserine (S159). Residues L161 to L196 are a coiled coil. A Phosphoserine modification is found at S206. The helical; Anchor for type IV membrane protein transmembrane segment at G219–G239 threads the bilayer.

This sequence belongs to the VAMP-associated protein (VAP) (TC 9.B.17) family. As to quaternary structure, homodimer, and heterodimer with VAPA. Interacts with VAMP1 and VAMP2. Interacts (via MSP domain) with ZFYVE27. Interacts with RMDN3. Interacts with KIF5A in a ZFYVE27-dependent manner. Interacts (via MSP domain) with STARD3 (via phospho-FFAT motif). Interacts with STARD3NL (via FFAT motif). Interacts with CERT1. Interacts with PLEKHA3 and SACM1L to form a ternary complex. Interacts with VPS13A (via FFAT motif). Interacts with RB1CC1 (via phosphorylated FFAT motif), MIGA2 (via phosphorylated FFAT motif), RMDN3 (via phosphorylated FFAT motif), OSBPL1A (via FFAT motif), KCNB1 (via phosphorylated FFAT motif) and KCNB2 (via phosphorylated FFAT motif). Interacts (via MSP domain) with WDR44; the interactions connect the endoplasmic reticulum (ER) with the endosomal tubule. Ubiquitous.

It localises to the endoplasmic reticulum membrane. Its function is as follows. Endoplasmic reticulum (ER)-anchored protein that mediates the formation of contact sites between the ER and endosomes via interaction with FFAT motif-containing proteins such as STARD3 or WDR44. Interacts with STARD3 in a FFAT motif phosphorylation dependent manner. Via interaction with WDR44 participates in neosynthesized protein export. Participates in the endoplasmic reticulum unfolded protein response (UPR) by inducing ERN1/IRE1 activity. Involved in cellular calcium homeostasis regulation. The sequence is that of Vesicle-associated membrane protein-associated protein B from Rattus norvegicus (Rat).